The following is a 352-amino-acid chain: Glycerol-3-phosphate dehydrogenase 1-like protein (352 aa).

Residue 13-18 (GSGNWG) coordinates NAD(+). A substrate-binding site is contributed by K123. A156 is an NAD(+) binding site. The active-site Proton acceptor is the K207. Residues R272, K299, and Q301 each coordinate NAD(+). Residue 272-273 (RN) coordinates substrate.

The protein belongs to the NAD-dependent glycerol-3-phosphate dehydrogenase family.

It is found in the cytoplasm. The enzyme catalyses sn-glycerol 3-phosphate + NAD(+) = dihydroxyacetone phosphate + NADH + H(+). In terms of biological role, plays a role in regulating cardiac sodium current. The polypeptide is Glycerol-3-phosphate dehydrogenase 1-like protein (gpd1l) (Xenopus tropicalis (Western clawed frog)).